The chain runs to 389 residues: Ethanolamine-phosphate cytidylyltransferase (389 aa).

CTP contacts are provided by residues 221–222 (AF), 229–232 (HVDF), K259, 307–310 (HGKT), and 336–340 (SGNDL). A phosphothreonine mark is found at T341 and T342.

The protein belongs to the cytidylyltransferase family.

The catalysed reaction is phosphoethanolamine + CTP + H(+) = CDP-ethanolamine + diphosphate. Its pathway is phospholipid metabolism; phosphatidylethanolamine biosynthesis; phosphatidylethanolamine from ethanolamine: step 2/3. Ethanolamine-phosphate cytidylyltransferase that catalyzes the second step in the synthesis of phosphatidylethanolamine (PE) from ethanolamine via the CDP-ethanolamine pathway. Phosphatidylethanolamine is a dominant inner-leaflet phospholipid in cell membranes, where it plays a role in membrane function by structurally stabilizing membrane-anchored proteins, and participates in important cellular processes such as cell division, cell fusion, blood coagulation, and apoptosis. This Bos taurus (Bovine) protein is Ethanolamine-phosphate cytidylyltransferase (PCYT2).